Reading from the N-terminus, the 514-residue chain is Efflux pump aflT (514 aa).

10 helical membrane passes run 13–33 (ISGMKLYLIVLSLLLAVFCVA), 61–81 (SAYLLTTCAFQLLYGKLYALF), 85–105 (WVFLVALCIFEVGSLICGVAP), 116–136 (IAGVGSSGIFTGALVTIAHIV), 146–166 (GLLGGMYGIASVAGPLLGGAF), 174–194 (WCFYINLPVGGVTAVVILFLL), 218–238 (GTIVFTPSIICVLLALQWGGV), 247–267 (IIALFVLFGVLLITFIIIQVL), 289–309 (VFVFFIGASMFVMIYYVPIWF), and 321–341 (GIDSIALILANTAGAIISGAV). An N-linked (GlcNAc...) asparagine glycan is attached at Asn343. The next 4 helical transmembrane spans lie at 351-371 (WFIVSSVIMSIGAGCLTLFTV), 378-398 (WIGFLFLYGIGVGFGFQQGAV), 411-431 (IGTALIWFVQMLGGALFTSVA), and 485-505 (LDVFQVALICSCLSILGAVGI).

The protein belongs to the major facilitator superfamily. TCR/Tet family.

Its subcellular location is the cell membrane. Its function is as follows. Efflux pump; part of the gene cluster that mediates the biosynthesis of aflatoxins. The polypeptide is Efflux pump aflT (Aspergillus parasiticus (strain ATCC 56775 / NRRL 5862 / SRRC 143 / SU-1)).